Here is a 144-residue protein sequence, read N- to C-terminus: Grifin (144 aa).

The Galectin domain occupies 5 to 133 (FEAFCAGGLA…DHQLAQVELA (129 aa)). Residue Ser-138 is modified to Phosphoserine.

As to quaternary structure, homodimer. In terms of tissue distribution, lens-specific. Located at the interface between lens fiber cells (at protein level).

This Rattus norvegicus (Rat) protein is Grifin (Grifin).